Here is a 253-residue protein sequence, read N- to C-terminus: RBPJ-interacting and tubulin-associated protein 1 (253 aa).

Disordered regions lie at residues 30 to 89 (SPAR…KNKY), 127 to 175 (TPPA…LCVP), and 188 to 253 (HLTV…PPWK). The span at 71–81 (SPSSRGSTPNL) shows a compositional bias: polar residues. The Nuclear localization signal motif lies at 81–97 (LTPRKKNKYRLIGHAPS). The interaction with RBPJ/RBPSUH stretch occupies residues 112–140 (RMAVGDAAKLRTLFWTPPATPRGSHTPCP). The tract at residues 140–253 (PRETPLRAIH…CPPKPKPPWK (114 aa)) is interaction with tubulin. The span at 188–228 (HLTVPSTGHPASSAPQTNGPWSPRPNTSGATVQSPLVTSKA) shows a compositional bias: polar residues.

Belongs to the RITA family. Interacts with RBPJ/RBPSUH.

The protein localises to the cytoplasm. It is found in the nucleus. The protein resides in the cytoskeleton. It localises to the microtubule organizing center. Its subcellular location is the centrosome. Tubulin-binding protein that acts as a negative regulator of Notch signaling pathway. Shuttles between the cytoplasm and the nucleus and mediates the nuclear export of RBPJ/RBPSUH, thereby preventing the interaction between RBPJ/RBPSUH and NICD product of Notch proteins (Notch intracellular domain), leading to down-regulate Notch-mediated transcription. May play a role in neurogenesis. The sequence is that of RBPJ-interacting and tubulin-associated protein 1 (Rita1) from Mus musculus (Mouse).